A 378-amino-acid chain; its full sequence is Probable mannosyltransferase MNT3 (378 aa).

Over 1-4 (MLWH) the chain is Cytoplasmic. The helical; Signal-anchor for type II membrane protein transmembrane segment at 5–25 (LVFILIAILLLTFSPKIESLF) threads the bilayer. Residues 26–378 (KSFTINKPTK…TNHFLNILHN (353 aa)) are Lumenal-facing. Residues Asn-73 and Asn-149 are each glycosylated (N-linked (GlcNAc...) asparagine).

Belongs to the glycosyltransferase 15 family.

Its subcellular location is the membrane. Its function is as follows. Transfers an alpha-D-mannosyl residue from GDP-mannose into lipid-linked oligosaccharide, forming an alpha-(1-&gt;2)-D-mannosyl-D-mannose linkage. The polypeptide is Probable mannosyltransferase MNT3 (MNT3) (Candida albicans (strain SC5314 / ATCC MYA-2876) (Yeast)).